The primary structure comprises 408 residues: CinA-like protein (408 aa).

This sequence belongs to the CinA family.

The protein is CinA-like protein of Thermotoga neapolitana (strain ATCC 49049 / DSM 4359 / NBRC 107923 / NS-E).